The chain runs to 353 residues: D-alanine--D-alanine ligase A (353 aa).

Residues 141-346 enclose the ATP-grasp domain; that stretch reads KRLVNEAGLS…YPEIINRLVA (206 aa). 169–224 provides a ligand contact to ATP; that stretch reads EQALGLPIFIKPARQGSSVGVHKVVTEADYQAAMSDGFIYDDKLLAEEFIQAREVE. 3 residues coordinate Mg(2+): Asp300, Glu313, and Asn315.

The protein belongs to the D-alanine--D-alanine ligase family. It depends on Mg(2+) as a cofactor. Mn(2+) serves as cofactor.

It localises to the cytoplasm. It catalyses the reaction 2 D-alanine + ATP = D-alanyl-D-alanine + ADP + phosphate + H(+). The protein operates within cell wall biogenesis; peptidoglycan biosynthesis. Its function is as follows. Cell wall formation. The chain is D-alanine--D-alanine ligase A from Brucella melitensis biotype 1 (strain ATCC 23456 / CCUG 17765 / NCTC 10094 / 16M).